We begin with the raw amino-acid sequence, 56 residues long: Cytochrome b-c1 complex subunit 10 (56 aa).

Residues 1–12 (MVTRFLGPRYRE) are Mitochondrial matrix-facing. A helical transmembrane segment spans residues 13-35 (LVKNWVPTAYTWGAVGAVGLVWA). The Mitochondrial intermembrane portion of the chain corresponds to 36-56 (TDWRLILDWVPYINGKFKKDN).

The protein belongs to the UQCR11/QCR10 family. In terms of assembly, component of the ubiquinol-cytochrome c oxidoreductase (cytochrome b-c1 complex, complex III, CIII), a multisubunit enzyme composed of 11 subunits. The complex is composed of 3 respiratory subunits cytochrome b, cytochrome c1 and Rieske protein UQCRFS1, 2 core protein subunits UQCRC1/QCR1 and UQCRC2/QCR2, and 6 low-molecular weight protein subunits UQCRH/QCR6, UQCRB/QCR7, UQCRQ/QCR8, UQCR10/QCR9, UQCR11/QCR10 and subunit 9, the cleavage product of Rieske protein UQCRFS1. The complex exists as an obligatory dimer and forms supercomplexes (SCs) in the inner mitochondrial membrane with NADH-ubiquinone oxidoreductase (complex I, CI) and cytochrome c oxidase (complex IV, CIV), resulting in different assemblies (supercomplex SCI(1)III(2)IV(1) and megacomplex MCI(2)III(2)IV(2)).

Its subcellular location is the mitochondrion inner membrane. Component of the ubiquinol-cytochrome c oxidoreductase, a multisubunit transmembrane complex that is part of the mitochondrial electron transport chain which drives oxidative phosphorylation. The respiratory chain contains 3 multisubunit complexes succinate dehydrogenase (complex II, CII), ubiquinol-cytochrome c oxidoreductase (cytochrome b-c1 complex, complex III, CIII) and cytochrome c oxidase (complex IV, CIV), that cooperate to transfer electrons derived from NADH and succinate to molecular oxygen, creating an electrochemical gradient over the inner membrane that drives transmembrane transport and the ATP synthase. The cytochrome b-c1 complex catalyzes electron transfer from ubiquinol to cytochrome c, linking this redox reaction to translocation of protons across the mitochondrial inner membrane, with protons being carried across the membrane as hydrogens on the quinol. In the process called Q cycle, 2 protons are consumed from the matrix, 4 protons are released into the intermembrane space and 2 electrons are passed to cytochrome c. QCR10 has a role in CIII assembly and RIP1 stability. The sequence is that of Cytochrome b-c1 complex subunit 10 (UQCR11) from Homo sapiens (Human).